The primary structure comprises 449 residues: MSVLTPREIVSELDKYIIGQEQAKRMVAVALRNRWRRQQLEPAIRDEVAPKNIIMMGPTGVGKTEIARRLARLSSSPFLKVEATKFTEVGYVGRDVESMIRDLMEISVNLVREEERDSVKTRAEAAAEERLLDLLLPSSPAVNTSFDTPQTPAGGAENTRNKLRTLWREGRLDHREVEMEVEMQSGPQMDVMTMPGMEDIGSQFKDMFSKAFPPKRKRRRMKVGDAYAILLQEESERLIDHEKVIELARERAEQTGIIFLDEIDKIASSQQGGKTADISREGVQRDLLPIVEGSAVNTKYGIIHTDHILFIGAGAFHYSKPSDLIPELQGRFPLRVELTALGSKEFLRILTEPKNALTVQYKALLATEGVQIEYTEDALEAVADFAQEANQETENIGARRLYTIMEKILADLSFEAPDKSGERIVIDREYVRQHLADITANRDLTRYIL.

ATP-binding positions include I18, 60–65 (GVGKTE), D261, E327, and R399.

The protein belongs to the ClpX chaperone family. HslU subfamily. As to quaternary structure, a double ring-shaped homohexamer of HslV is capped on each side by a ring-shaped HslU homohexamer. The assembly of the HslU/HslV complex is dependent on binding of ATP.

The protein localises to the cytoplasm. ATPase subunit of a proteasome-like degradation complex; this subunit has chaperone activity. The binding of ATP and its subsequent hydrolysis by HslU are essential for unfolding of protein substrates subsequently hydrolyzed by HslV. HslU recognizes the N-terminal part of its protein substrates and unfolds these before they are guided to HslV for hydrolysis. In Oleidesulfovibrio alaskensis (strain ATCC BAA-1058 / DSM 17464 / G20) (Desulfovibrio alaskensis), this protein is ATP-dependent protease ATPase subunit HslU.